The chain runs to 85 residues: Putative membrane protein insertion efficiency factor (85 aa).

It belongs to the UPF0161 family.

The protein localises to the cell inner membrane. Functionally, could be involved in insertion of integral membrane proteins into the membrane. This is Putative membrane protein insertion efficiency factor from Tolumonas auensis (strain DSM 9187 / NBRC 110442 / TA 4).